Reading from the N-terminus, the 495-residue chain is ATP synthase subunit beta, chloroplastic (495 aa).

Position 172–179 (172–179) interacts with ATP; it reads GGAGVGKT.

It belongs to the ATPase alpha/beta chains family. In terms of assembly, F-type ATPases have 2 components, CF(1) - the catalytic core - and CF(0) - the membrane proton channel. CF(1) has five subunits: alpha(3), beta(3), gamma(1), delta(1), epsilon(1). CF(0) has four main subunits: a(1), b(1), b'(1) and c(9-12).

It localises to the plastid. The protein resides in the chloroplast thylakoid membrane. The catalysed reaction is ATP + H2O + 4 H(+)(in) = ADP + phosphate + 5 H(+)(out). Its function is as follows. Produces ATP from ADP in the presence of a proton gradient across the membrane. The catalytic sites are hosted primarily by the beta subunits. This chain is ATP synthase subunit beta, chloroplastic, found in Pteridium aquilinum (Bracken fern).